A 289-amino-acid chain; its full sequence is 33 kDa chaperonin (289 aa).

2 disulfide bridges follow: Cys235–Cys237 and Cys268–Cys271.

This sequence belongs to the HSP33 family. Post-translationally, under oxidizing conditions two disulfide bonds are formed involving the reactive cysteines. Under reducing conditions zinc is bound to the reactive cysteines and the protein is inactive.

Its subcellular location is the cytoplasm. In terms of biological role, redox regulated molecular chaperone. Protects both thermally unfolding and oxidatively damaged proteins from irreversible aggregation. Plays an important role in the bacterial defense system toward oxidative stress. This chain is 33 kDa chaperonin, found in Bacillus licheniformis (strain ATCC 14580 / DSM 13 / JCM 2505 / CCUG 7422 / NBRC 12200 / NCIMB 9375 / NCTC 10341 / NRRL NRS-1264 / Gibson 46).